The following is a 348-amino-acid chain: dTDP-glucose 4,6-dehydratase (348 aa).

Residues 15 to 16 (FI), 37 to 40 (DKLT), 62 to 63 (DI), and 82 to 86 (YAAES) contribute to the NAD(+) site. Substrate-binding residues include Ser86 and Asn88. Position 101 (Thr101) interacts with NAD(+). A substrate-binding site is contributed by Thr125. Asp126 acts as the Proton donor in catalysis. Residues Glu127 and Tyr161 each act as proton acceptor in the active site. NAD(+) is bound at residue 161–165 (YSSTK). Asn190 serves as a coordination point for substrate. Asn191 contributes to the NAD(+) binding site. Residues 200–205 (KFIPRQ), 216–218 (KLY), Arg225, Asn260, and 283–287 (DRAGH) contribute to the substrate site.

Belongs to the NAD(P)-dependent epimerase/dehydratase family. dTDP-glucose dehydratase subfamily. In terms of assembly, homodimer. It depends on NAD(+) as a cofactor.

The catalysed reaction is dTDP-alpha-D-glucose = dTDP-4-dehydro-6-deoxy-alpha-D-glucose + H2O. It participates in carbohydrate biosynthesis; dTDP-L-rhamnose biosynthesis. Catalyzes the dehydration of dTDP-D-glucose to form dTDP-6-deoxy-D-xylo-4-hexulose via a three-step process involving oxidation, dehydration and reduction. The chain is dTDP-glucose 4,6-dehydratase (rmlB) from Streptococcus mutans serotype c (strain ATCC 700610 / UA159).